Here is a 338-residue protein sequence, read N- to C-terminus: Ketol-acid reductoisomerase (NADP(+)) (338 aa).

Positions 1-181 constitute a KARI N-terminal Rossmann domain; sequence MKVFYDKDAD…GGGRAGIIET (181 aa). Residues 24-27, Arg-47, and Ser-52 contribute to the NADP(+) site; that span reads YGSQ. Residue His-107 is part of the active site. Gly-133 contributes to the NADP(+) binding site. Residues 182–327 enclose the KARI C-terminal knotted domain; the sequence is NFREETETDL…AKLRAMMPWI (146 aa). Mg(2+) is bound by residues Asp-190, Glu-194, Glu-226, and Glu-230. Position 251 (Ser-251) interacts with substrate.

This sequence belongs to the ketol-acid reductoisomerase family. It depends on Mg(2+) as a cofactor.

It carries out the reaction (2R)-2,3-dihydroxy-3-methylbutanoate + NADP(+) = (2S)-2-acetolactate + NADPH + H(+). The catalysed reaction is (2R,3R)-2,3-dihydroxy-3-methylpentanoate + NADP(+) = (S)-2-ethyl-2-hydroxy-3-oxobutanoate + NADPH + H(+). Its pathway is amino-acid biosynthesis; L-isoleucine biosynthesis; L-isoleucine from 2-oxobutanoate: step 2/4. It participates in amino-acid biosynthesis; L-valine biosynthesis; L-valine from pyruvate: step 2/4. Its function is as follows. Involved in the biosynthesis of branched-chain amino acids (BCAA). Catalyzes an alkyl-migration followed by a ketol-acid reduction of (S)-2-acetolactate (S2AL) to yield (R)-2,3-dihydroxy-isovalerate. In the isomerase reaction, S2AL is rearranged via a Mg-dependent methyl migration to produce 3-hydroxy-3-methyl-2-ketobutyrate (HMKB). In the reductase reaction, this 2-ketoacid undergoes a metal-dependent reduction by NADPH to yield (R)-2,3-dihydroxy-isovalerate. The chain is Ketol-acid reductoisomerase (NADP(+)) from Ralstonia nicotianae (strain ATCC BAA-1114 / GMI1000) (Ralstonia solanacearum).